Consider the following 581-residue polypeptide: Frizzled-8 (581 aa).

A signal peptide spans 1–23 (MESLSLSLLLLVSWLQGSQCAAA). The FZ domain occupies 24–144 (KELSCQEITV…GNPDTLCMDY (121 aa)). Over 24-239 (KELSCQEITV…PEERTFTEFW (216 aa)) the chain is Extracellular. Cystine bridges form between Cys28-Cys89, Cys36-Cys82, Cys73-Cys111, Cys100-Cys141, and Cys104-Cys128. Asn42 carries an N-linked (GlcNAc...) asparagine glycan. 64–71 (QFWPLVVI) contacts hexadecanoate. The interval 88 to 93 (ICLEDY) is wnt-binding. The wnt-binding stretch occupies residues 140–146 (LCMDYYN). A glycan (N-linked (GlcNAc...) asparagine) is linked at Asn146. A disordered region spans residues 151–189 (TTAAPSHPEPPKPPARSVPKGRTRVEPPRSRSRATGCES). Pro residues predominate over residues 157-166 (HPEPPKPPAR). A helical transmembrane segment spans residues 240-260 (IGLWSVLCFASTFATVSTFLI). Over 261–271 (DMERFKYPERP) the chain is Cytoplasmic. Residues 272-292 (IIFLSACYLLVSTGYLIRLIA) traverse the membrane as a helical segment. At 293 to 320 (GHEKVACSRGELDLEHIIHYETTGPALC) the chain is on the extracellular side. Residues 321-341 (TLVFLLIYFFGMASSIWWVIL) traverse the membrane as a helical segment. Topologically, residues 342–377 (SLTWFLAAGMKWGNEAIAGYSQYFHLAAWLVPSIKS) are cytoplasmic. The chain crosses the membrane as a helical span at residues 378–398 (IAVLALSSVDGDPVAGICFVG). The Extracellular segment spans residues 399–407 (NQNLDNLRG). A helical membrane pass occupies residues 408–428 (FVLAPLVIYLFIGSMFLLAGF). Over 429–454 (VSLFRIRSVIKQGGTKTDKLEKLMIR) the chain is Cytoplasmic. The helical transmembrane segment at 455 to 475 (IGIFSVLYTVPATIVVACFFY) threads the bilayer. At 476–505 (EQHNRQGWEVAHNCNSCQPEMAQPHRPDYA) the chain is on the extracellular side. Residues 506–526 (VFMLKYFMCLVVGITSGVWIW) form a helical membrane-spanning segment. Residues 527–581 (SGKTLESWRAFCTRCCWGSKATGGSMYSDVSTGLTWRSGTGSSVSCPKQMPLSQV) are Cytoplasmic-facing. Positions 529–534 (KTLESW) match the Lys-Thr-X-X-X-Trp motif, mediates interaction with the PDZ domain of Dvl family members motif. The PDZ-binding signature appears at 579 to 581 (SQV).

Belongs to the G-protein coupled receptor Fz/Smo family. In terms of assembly, interacts with lypd6 and the interaction is strongly enhanced by wnt3a.

The protein resides in the membrane. The protein localises to the cell membrane. Its function is as follows. Receptor for Wnt proteins. Most of frizzled receptors are coupled to the beta-catenin canonical signaling pathway, which leads to the activation of disheveled proteins, inhibition of GSK-3 kinase, nuclear accumulation of beta-catenin and activation of Wnt target genes. A second signaling pathway involving PKC and calcium fluxes has been seen for some family members, but it is not yet clear if it represents a distinct pathway or if it can be integrated in the canonical pathway, as PKC seems to be required for Wnt-mediated inactivation of GSK-3 kinase. Both pathways seem to involve interactions with G-proteins. May be involved in transduction and intercellular transmission of polarity information during tissue morphogenesis and/or in differentiated tissues. Activation by Wnt8, Wnt5A or Wnt3A induces expression of beta-catenin target genes. Displays an axis-inducing activity. The chain is Frizzled-8 (fzd8) from Xenopus laevis (African clawed frog).